The chain runs to 290 residues: 2-dehydro-3-deoxy-phosphogluconate/2-dehydro-3-deoxy-6-phosphogalactonate aldolase (290 aa).

Substrate-binding positions include 42 to 43 (TT), 129 to 131 (YNY), and 155 to 157 (KDT). Residue K155 is the Schiff-base intermediate with substrate of the active site.

Belongs to the DapA family. KDPG aldolase subfamily. Homotetramer; dimer of dimers.

The catalysed reaction is 2-dehydro-3-deoxy-6-phospho-D-gluconate = D-glyceraldehyde 3-phosphate + pyruvate. It carries out the reaction 2-dehydro-3-deoxy-6-phospho-D-galactonate = D-glyceraldehyde 3-phosphate + pyruvate. It functions in the pathway carbohydrate acid metabolism; 2-dehydro-3-deoxy-D-gluconate degradation; D-glyceraldehyde 3-phosphate and pyruvate from 2-dehydro-3-deoxy-D-gluconate: step 2/2. Involved in the degradation of glucose and galactose via the Entner-Doudoroff pathway. Catalyzes the reversible cleavage of 2-keto-3-deoxy-6-phosphogluconate (KDPG) and 2-keto-3-deoxygluconate (KDG) forming pyruvate and glyceraldehyde 3-phosphate or glyceraldehyde, respectively. It is also able to catalyze the reversible cleavage of 2-keto-3-deoxy-6-phosphogalactonate (KDPGal) and 2-keto-3-deoxygalactonate (KDGal). The protein is 2-dehydro-3-deoxy-phosphogluconate/2-dehydro-3-deoxy-6-phosphogalactonate aldolase (kdgA) of Sulfurisphaera tokodaii (strain DSM 16993 / JCM 10545 / NBRC 100140 / 7) (Sulfolobus tokodaii).